The following is a 278-amino-acid chain: tRNA pseudouridine synthase A (278 aa).

The active-site Nucleophile is Asp-52. Substrate is bound at residue Tyr-110. Positions 259 to 278 (SKRQNGTTKVEQPSSYVHEE) are disordered. Polar residues predominate over residues 261–278 (RQNGTTKVEQPSSYVHEE).

The protein belongs to the tRNA pseudouridine synthase TruA family. In terms of assembly, homodimer.

The catalysed reaction is uridine(38/39/40) in tRNA = pseudouridine(38/39/40) in tRNA. In terms of biological role, formation of pseudouridine at positions 38, 39 and 40 in the anticodon stem and loop of transfer RNAs. This chain is tRNA pseudouridine synthase A, found in Chloroflexus aurantiacus (strain ATCC 29366 / DSM 635 / J-10-fl).